The primary structure comprises 328 residues: Transcriptional regulator protein Pur-beta-B (328 aa).

3 disordered regions span residues 1-35 (MADG…ELAS), 100-124 (SPEQ…RALK), and 289-328 (QERQ…VDDD). An N-acetylalanine modification is found at A2. Residues 9–18 (ERGGSSGGPS) are compositionally biased toward gly residues. Residues 24-35 (MSREQETQELAS) are compositionally biased toward basic and acidic residues. A DNA-binding region spans residues 27–260 (EQETQELASK…LRVSEVKPSY (234 aa)). Over residues 289 to 303 (QERQRDKMYDRRGPG) the composition is skewed to basic and acidic residues. Gly residues predominate over residues 304–317 (ERGGSLGPGAGGGG). The segment covering 318–328 (DDSETEDVDDD) has biased composition (acidic residues).

The protein belongs to the PUR DNA-binding protein family.

The protein resides in the nucleus. Transcriptional regulator which can act as an activator or a repressor. The sequence is that of Transcriptional regulator protein Pur-beta-B (purb-b) from Xenopus laevis (African clawed frog).